The following is a 1001-amino-acid chain: Open rectifier potassium channel protein 1 (1001 aa).

Over M1–W6 the chain is Cytoplasmic. The chain crosses the membrane as a helical span at residues I7–I27. N-linked (GlcNAc...) asparagine glycosylation is present at N58. Positions A95–I111 form an intramembrane region, pore-forming. A helical transmembrane segment spans residues M120–L140. The Cytoplasmic portion of the chain corresponds to G141–Q170. A helical transmembrane segment spans residues L171 to L191. The pore-forming intramembrane region spans L208–V224. The chain crosses the membrane as a helical span at residues I244–I264. Topologically, residues T265–K1001 are cytoplasmic. Phosphoserine is present on residues S332, S373, S562, and S565. The segment at S591–M668 is disordered. Residues S685, S691, and S715 each carry the phosphoserine modification. Disordered regions lie at residues G768 to Q795 and S830 to K1001. The span at T832–A841 shows a compositional bias: low complexity. Residues A855 to S873 show a composition bias toward polar residues. Over residues R911–P926 the composition is skewed to low complexity. The span at R961–K983 shows a compositional bias: polar residues. The segment covering S984–K1001 has biased composition (low complexity).

This sequence belongs to the two pore domain potassium channel (TC 1.A.1.8) family. In terms of tissue distribution, widespread expression in adult, strongest expression in muscle, brain and ovary. Also present at low levels in larva and embryo.

The protein resides in the membrane. In terms of biological role, background potassium channel. Rectification is dependent on external potassium concentration. Acts as an outwardly rectifying channel but as external potassium levels increase, this is reversed. The protein is Open rectifier potassium channel protein 1 (Ork1) of Drosophila melanogaster (Fruit fly).